Reading from the N-terminus, the 361-residue chain is Histidinol-phosphate aminotransferase (361 aa).

Lys-219 bears the N6-(pyridoxal phosphate)lysine mark.

Belongs to the class-II pyridoxal-phosphate-dependent aminotransferase family. Histidinol-phosphate aminotransferase subfamily. As to quaternary structure, homodimer. Pyridoxal 5'-phosphate is required as a cofactor.

It catalyses the reaction L-histidinol phosphate + 2-oxoglutarate = 3-(imidazol-4-yl)-2-oxopropyl phosphate + L-glutamate. It participates in amino-acid biosynthesis; L-histidine biosynthesis; L-histidine from 5-phospho-alpha-D-ribose 1-diphosphate: step 7/9. This Acinetobacter baumannii (strain AB307-0294) protein is Histidinol-phosphate aminotransferase.